Here is a 543-residue protein sequence, read N- to C-terminus: Protein P78/83 (543 aa).

3 disordered regions span residues 147–222 (QALP…QPAA), 235–325 (RNEK…SLSN), and 373–400 (MAKS…ANTP). The segment covering 182–221 (AAPPPPPSPVPNIPAPPPPPPPSMSELPPAPPMPTEPQPA) has biased composition (pro residues). Residues 226–246 (DRQQLLEAIRNEKNRTRLRPV) enclose the WH2 domain. The segment covering 271 to 321 (PKPPSASPPPPPPPPPPPAPPAPPPMVDLSSAPPPPPLVDLPSEMLPPPAP) has biased composition (pro residues). Over residues 375–384 (KSSSEATSND) the composition is skewed to polar residues.

As to quaternary structure, forms a complex with proteins C42 and E27. Interacts with host actin-related protein 2/3 complex. Interacts with protein Ac102.

It is found in the host cytoplasm. It localises to the host nucleus. Functionally, plays a role in the transport of the nucleocapsids from the cytoplasm toward the host nucleus together with the host actin-polymerizing Arp2/3 complex. This chain is Protein P78/83 (P61), found in Lepidoptera (butterflies and moths).